The chain runs to 497 residues: Probable cytosol aminopeptidase (497 aa).

Residues Lys263 and Asp268 each contribute to the Mn(2+) site. The active site involves Lys275. Asp286, Asp345, and Glu347 together coordinate Mn(2+). Arg349 is an active-site residue.

This sequence belongs to the peptidase M17 family. Requires Mn(2+) as cofactor.

The protein localises to the cytoplasm. The enzyme catalyses Release of an N-terminal amino acid, Xaa-|-Yaa-, in which Xaa is preferably Leu, but may be other amino acids including Pro although not Arg or Lys, and Yaa may be Pro. Amino acid amides and methyl esters are also readily hydrolyzed, but rates on arylamides are exceedingly low.. It catalyses the reaction Release of an N-terminal amino acid, preferentially leucine, but not glutamic or aspartic acids.. Its function is as follows. Presumably involved in the processing and regular turnover of intracellular proteins. Catalyzes the removal of unsubstituted N-terminal amino acids from various peptides. The polypeptide is Probable cytosol aminopeptidase (Allorhizobium ampelinum (strain ATCC BAA-846 / DSM 112012 / S4) (Agrobacterium vitis (strain S4))).